The following is an 84-amino-acid chain: Beta-defensin 119 (84 aa).

Residues 1–21 (MKFLFLFLAILLATEVPVISG) form the signal peptide. Disulfide bonds link Cys-28/Cys-55, Cys-35/Cys-49, and Cys-39/Cys-56.

Belongs to the beta-defensin family. Abundant expression in the male reproductive tract only. Expressed abundantly in testis, while expression in epididymis decreased gradually from caput to cauda.

The protein localises to the secreted. In terms of biological role, has antibacterial activity. This is Beta-defensin 119 (DEFB119) from Macaca mulatta (Rhesus macaque).